Here is an 83-residue protein sequence, read N- to C-terminus: Bublin coiled-coil protein (83 aa).

Residues 1–25 (MSGPNGDLGTPVEAGAEGEEDGFGE) form a disordered region. Positions 25 to 74 (EAEYAAINSMLDQINSCLDHLEEKNDHLHARLQELLESNRQTRLEFQQQL) form a coiled coil. S82 carries the post-translational modification Phosphoserine.

It belongs to the UPF0184 (EST00098) family.

It is found in the cell junction. The protein localises to the cytoplasm. Its subcellular location is the cytoskeleton. In terms of biological role, essential for intermediate filament organization in intestinal cells, interacts with intermediate filament and regulates intestinal lumen morphology. The polypeptide is Bublin coiled-coil protein (BBLN) (Bos taurus (Bovine)).